A 352-amino-acid chain; its full sequence is Gap junction alpha-4 protein (352 aa).

The Cytoplasmic portion of the chain corresponds to 2–23; the sequence is GDWEFLEKLLDQVQEHSTSIGK. A helical membrane pass occupies residues 24 to 46; sequence IWLMVLFIFRILILGLAGESVWG. At 47 to 76 the chain is on the extracellular side; sequence DEQSDFICNTEQPGCTNVCYDKAFPISHVR. A helical membrane pass occupies residues 77–99; that stretch reads YWVLQFLFVSTPTLFYLGHVIYL. The Cytoplasmic portion of the chain corresponds to 100 to 153; it reads SRREEKLKQKESELRALDDKEQVEQAIAIIEKKKMKLYIQEDGTVKIKGALMCT. A helical membrane pass occupies residues 154 to 176; the sequence is YLTSVIFKSLFEAGFLLGQWYLY. The Extracellular portion of the chain corresponds to 177–208; that stretch reads GFVMTPIYVCERVPCPHKVDCFVSRPMEKTIF. The helical transmembrane segment at 209–231 threads the bilayer; that stretch reads IVFMLVVSLISLFLNVLELIHLV. At 232 to 352 the chain is on the cytoplasmic side; the sequence is CKSMIDTLKK…SSSASKKQYV (121 aa). A disordered region spans residues 330–352; the sequence is KTHSTMEKPSTRASSSASKKQYV. Residues 340-352 show a composition bias toward polar residues; that stretch reads TRASSSASKKQYV.

The protein belongs to the connexin family. Alpha-type (group II) subfamily. A connexon is composed of a hexamer of connexins.

It is found in the cell membrane. The protein localises to the cell junction. The protein resides in the gap junction. In terms of biological role, one gap junction consists of a cluster of closely packed pairs of transmembrane channels, the connexons, through which materials of low MW diffuse from one cell to a neighboring cell. The chain is Gap junction alpha-4 protein (gja4) from Xenopus tropicalis (Western clawed frog).